Consider the following 286-residue polypeptide: Acetyl-coenzyme A carboxylase carboxyl transferase subunit beta (286 aa).

The CoA carboxyltransferase N-terminal domain maps to 26-286 (LWEKCVKCDA…LAKFTRRAAV (261 aa)). Positions 30, 33, 49, and 52 each coordinate Zn(2+). Residues 30–52 (CVKCDAVLYKPELEKNLDVCPKC) form a C4-type zinc finger.

The protein belongs to the AccD/PCCB family. In terms of assembly, acetyl-CoA carboxylase is a heterohexamer composed of biotin carboxyl carrier protein (AccB), biotin carboxylase (AccC) and two subunits each of ACCase subunit alpha (AccA) and ACCase subunit beta (AccD). It depends on Zn(2+) as a cofactor.

It is found in the cytoplasm. It carries out the reaction N(6)-carboxybiotinyl-L-lysyl-[protein] + acetyl-CoA = N(6)-biotinyl-L-lysyl-[protein] + malonyl-CoA. The protein operates within lipid metabolism; malonyl-CoA biosynthesis; malonyl-CoA from acetyl-CoA: step 1/1. Component of the acetyl coenzyme A carboxylase (ACC) complex. Biotin carboxylase (BC) catalyzes the carboxylation of biotin on its carrier protein (BCCP) and then the CO(2) group is transferred by the transcarboxylase to acetyl-CoA to form malonyl-CoA. The protein is Acetyl-coenzyme A carboxylase carboxyl transferase subunit beta of Cellvibrio japonicus (strain Ueda107) (Pseudomonas fluorescens subsp. cellulosa).